Consider the following 223-residue polypeptide: Endonuclease V (223 aa).

Mg(2+) contacts are provided by aspartate 35 and aspartate 103.

The protein belongs to the endonuclease V family. Mg(2+) serves as cofactor.

Its subcellular location is the cytoplasm. The catalysed reaction is Endonucleolytic cleavage at apurinic or apyrimidinic sites to products with a 5'-phosphate.. In terms of biological role, DNA repair enzyme involved in the repair of deaminated bases. Selectively cleaves double-stranded DNA at the second phosphodiester bond 3' to a deoxyinosine leaving behind the intact lesion on the nicked DNA. The sequence is that of Endonuclease V from Escherichia coli O45:K1 (strain S88 / ExPEC).